A 546-amino-acid polypeptide reads, in one-letter code: Probable protein kinase UbiB (546 aa).

Positions 123–501 (DFQEIPLASA…RTNHGQALFL (379 aa)) constitute a Protein kinase domain. ATP contacts are provided by residues 129 to 137 (LASASISQV) and Lys-152. Residue Asp-287 is the Proton acceptor of the active site. Helical transmembrane passes span 497–517 (QALF…FLYI) and 521–541 (YLKI…TIGW).

Belongs to the ABC1 family. UbiB subfamily.

The protein localises to the cell inner membrane. It participates in cofactor biosynthesis; ubiquinone biosynthesis [regulation]. Its function is as follows. Is probably a protein kinase regulator of UbiI activity which is involved in aerobic coenzyme Q (ubiquinone) biosynthesis. The chain is Probable protein kinase UbiB from Blochmanniella pennsylvanica (strain BPEN).